The following is a 639-amino-acid chain: Lipoteichoic acid synthase 1 (639 aa).

The Cytoplasmic segment spans residues 1-3; sequence MKK. Residues 4–24 form a helical membrane-spanning segment; the sequence is LFSYKLSFFVLAVILFWAKTY. The Extracellular segment spans residues 25–41; sequence LSYKTEFNLGVKGTTQE. The helical transmembrane segment at 42–62 threads the bilayer; that stretch reads ILLIFNPFSSAVFFLGLALLA. The Cytoplasmic portion of the chain corresponds to 63-67; that stretch reads KGRKS. Residues 68-88 form a helical membrane-spanning segment; sequence AIIMLIIDFLMTFVLYANILF. Over 89-116 the chain is Extracellular; that stretch reads YRFFDDFLTFPNIKQSGNVGNMGDGIFS. A helical transmembrane segment spans residues 117–137; that stretch reads IMAGHDIFYFLDIIILIAVLI. Residues 138–150 are Cytoplasmic-facing; it reads WRPELKEYKMKKR. The chain crosses the membrane as a helical span at residues 151–171; sequence FASLVILSGIALFFINLHYAE. Over 172–639 the chain is Extracellular; sequence KDRPQLLTRT…YHYGKEKEIK (468 aa). Residues Glu-252 and Thr-297 each coordinate Mn(2+). Residue Thr-297 is part of the active site. His-413 is a binding site for substrate. Mn(2+)-binding residues include Asp-472 and His-473.

It belongs to the LTA synthase family. Post-translationally, proteolytically cleaved by the type I signal peptidases SipT and SipV.

The protein localises to the cell membrane. The protein resides in the secreted. It participates in cell wall biogenesis; lipoteichoic acid biosynthesis. Its function is as follows. Catalyzes the polymerization of lipoteichoic acid (LTA) polyglycerol phosphate, a reaction that presumably uses phosphatidylglycerol (PG) as substrate. The sequence is that of Lipoteichoic acid synthase 1 (ltaS1) from Bacillus subtilis (strain 168).